Here is a 429-residue protein sequence, read N- to C-terminus: Glutamate-1-semialdehyde 2,1-aminomutase 2 (429 aa).

Lys-268 carries the N6-(pyridoxal phosphate)lysine modification.

This sequence belongs to the class-III pyridoxal-phosphate-dependent aminotransferase family. HemL subfamily. In terms of assembly, homodimer. Pyridoxal 5'-phosphate serves as cofactor.

It localises to the cytoplasm. It catalyses the reaction (S)-4-amino-5-oxopentanoate = 5-aminolevulinate. The protein operates within porphyrin-containing compound metabolism; protoporphyrin-IX biosynthesis; 5-aminolevulinate from L-glutamyl-tRNA(Glu): step 2/2. This Halalkalibacterium halodurans (strain ATCC BAA-125 / DSM 18197 / FERM 7344 / JCM 9153 / C-125) (Bacillus halodurans) protein is Glutamate-1-semialdehyde 2,1-aminomutase 2.